A 203-amino-acid chain; its full sequence is LexA repressor (203 aa).

Positions 28–48 (RAEIASQLGFRSPNAAEEHLK) form a DNA-binding region, H-T-H motif. Catalysis depends on for autocatalytic cleavage activity residues serine 120 and lysine 157.

Belongs to the peptidase S24 family. As to quaternary structure, homodimer.

The catalysed reaction is Hydrolysis of Ala-|-Gly bond in repressor LexA.. In terms of biological role, represses a number of genes involved in the response to DNA damage (SOS response), including recA and lexA. Binds to the 16 bp palindromic sequence 5'-CTGTATATATATACAG-3'. In the presence of single-stranded DNA, RecA interacts with LexA causing an autocatalytic cleavage which disrupts the DNA-binding part of LexA, leading to derepression of the SOS regulon and eventually DNA repair. This is LexA repressor from Proteus mirabilis (strain HI4320).